Here is a 251-residue protein sequence, read N- to C-terminus: Chloride intracellular channel protein 5 (251 aa).

The interval Met1–Pro98 is required for insertion into the membrane. The short motif at Cys32–Ser35 is the G-site element. The helical transmembrane segment at Phe34 to Val54 threads the bilayer. The 141-residue stretch at Tyr101 to Tyr241 folds into the GST C-terminal domain.

The protein belongs to the chloride channel CLIC family. As to quaternary structure, component of a multimeric complex consisting of several cytoskeletal proteins, including actin, ezrin, alpha-actinin, gelsolin, and IQGAP1. Interacts with AKAP9. Interacts with TPRN. TPRN, CLIC5 and PTPQR form concentric rings at the base of stereocilia and may form a complex. Interacts with EZR, MYO6 and RDX; the proteins may work together as a complex to stabilize linkages between the plasma membrane and subjacent actin cytoskeleton at the stereocilium base. In terms of tissue distribution, detected in cochlea, in cochlear and vestibular hair cell bundles in the organ of Corti (at protein level). Expressed neonatal and adult cardiomyocytes (at protein level).

It is found in the golgi apparatus. The protein resides in the cytoplasm. It localises to the cytoskeleton. The protein localises to the microtubule organizing center. Its subcellular location is the centrosome. It is found in the cell cortex. The protein resides in the membrane. It localises to the apical cell membrane. The protein localises to the mitochondrion. Its subcellular location is the cell projection. It is found in the stereocilium. It carries out the reaction Na(+)(in) = Na(+)(out). The catalysed reaction is K(+)(in) = K(+)(out). It catalyses the reaction chloride(in) = chloride(out). Inhibited by F-actin. In the soluble state, catalyzes glutaredoxin-like thiol disulfide exchange reactions with reduced glutathione as electron donor. Can insert into membranes and form non-selective ion channels almost equally permeable to Na(+), K(+) and Cl(-). Required for normal hearing. It is necessary for the formation of stereocilia in the inner ear and normal development of the organ of Corti. May play a role in the regulation of transepithelial ion absorption and secretion. Is required for the development and/or maintenance of the proper glomerular endothelial cell and podocyte architecture. Plays a role in formation of the lens suture in the eye, which is important for normal optical properties of the lens. This Rattus norvegicus (Rat) protein is Chloride intracellular channel protein 5 (Clic5).